An 861-amino-acid chain; its full sequence is Linoleate 9S-lipoxygenase 2 (861 aa).

In terms of domain architecture, PLAT spans 29–160 (NALDFTDLAG…RYKSDRIFFV (132 aa)). The Lipoxygenase domain maps to 163 to 861 (PYLPSKTPEL…GKGIPNSVSI (699 aa)). Residues 212–246 (EGKENVRTTLGGSAEYPYPRRGRTGRPPTRTDPKS) are disordered. The Fe cation site is built by His-522, His-527, His-713, Asn-717, and Ile-861.

This sequence belongs to the lipoxygenase family. In terms of assembly, monomer. The cofactor is Fe cation. Highly expressed in tubers and roots. Detected in flower buds and leaves.

The protein localises to the cytoplasm. It carries out the reaction (9Z,12Z)-octadecadienoate + O2 = (9S)-hydroperoxy-(10E,12Z)-octadecadienoate. Its pathway is lipid metabolism; oxylipin biosynthesis. Functionally, plant lipoxygenases may be involved in a number of diverse aspects of plant physiology including growth and development, pest resistance, and senescence or responses to wounding. Catalyzes the hydroperoxidation of lipids containing a cis,cis-1,4-pentadiene structure. Linoleic acid is the preferred substrate, but is also active with linolenic and arachidonic acids. This is Linoleate 9S-lipoxygenase 2 (LOX1.2) from Solanum tuberosum (Potato).